A 232-amino-acid chain; its full sequence is 5'-methylthioadenosine/S-adenosylhomocysteine nucleosidase (232 aa).

Glu-12 functions as the Proton acceptor in the catalytic mechanism. Substrate contacts are provided by residues Gly-78, Val-152, and Met-173 to Glu-174. The active-site Proton donor is Asp-197.

It belongs to the PNP/UDP phosphorylase family. MtnN subfamily. Homodimer.

It carries out the reaction S-adenosyl-L-homocysteine + H2O = S-(5-deoxy-D-ribos-5-yl)-L-homocysteine + adenine. The catalysed reaction is S-methyl-5'-thioadenosine + H2O = 5-(methylsulfanyl)-D-ribose + adenine. It catalyses the reaction 5'-deoxyadenosine + H2O = 5-deoxy-D-ribose + adenine. It functions in the pathway amino-acid biosynthesis; L-methionine biosynthesis via salvage pathway; S-methyl-5-thio-alpha-D-ribose 1-phosphate from S-methyl-5'-thioadenosine (hydrolase route): step 1/2. In terms of biological role, catalyzes the irreversible cleavage of the glycosidic bond in both 5'-methylthioadenosine (MTA) and S-adenosylhomocysteine (SAH/AdoHcy) to adenine and the corresponding thioribose, 5'-methylthioribose and S-ribosylhomocysteine, respectively. Also cleaves 5'-deoxyadenosine, a toxic by-product of radical S-adenosylmethionine (SAM) enzymes, into 5-deoxyribose and adenine. Thus, is required for in vivo function of the radical SAM enzymes biotin synthase and lipoic acid synthase, that are inhibited by 5'-deoxyadenosine accumulation. This chain is 5'-methylthioadenosine/S-adenosylhomocysteine nucleosidase, found in Buchnera aphidicola subsp. Acyrthosiphon pisum (strain APS) (Acyrthosiphon pisum symbiotic bacterium).